The following is a 207-amino-acid chain: LexA repressor (207 aa).

The segment at residues 28–48 (VREIGEAVGLASSSTVHGHLA) is a DNA-binding region (H-T-H motif). Residues S129 and K167 each act as for autocatalytic cleavage activity in the active site.

This sequence belongs to the peptidase S24 family. Homodimer.

It catalyses the reaction Hydrolysis of Ala-|-Gly bond in repressor LexA.. Represses a number of genes involved in the response to DNA damage (SOS response), including recA and lexA. In the presence of single-stranded DNA, RecA interacts with LexA causing an autocatalytic cleavage which disrupts the DNA-binding part of LexA, leading to derepression of the SOS regulon and eventually DNA repair. The protein is LexA repressor of Geobacillus kaustophilus (strain HTA426).